The following is a 459-amino-acid chain: tRNA modification GTPase MnmE (459 aa).

(6S)-5-formyl-5,6,7,8-tetrahydrofolate-binding residues include Arg-30, Glu-93, and Lys-132. A TrmE-type G domain is found at 226–381; sequence GVTMAIVGKP…LEEKILESVK (156 aa). Position 236 (Asn-236) interacts with K(+). GTP is bound by residues 236–241, 255–261, and 280–283; these read NVGKST, TDIPGTT, and DTAG. Ser-240 serves as a coordination point for Mg(2+). Residues Thr-255, Ile-257, and Thr-260 each contribute to the K(+) site. Position 261 (Thr-261) interacts with Mg(2+). Lys-459 lines the (6S)-5-formyl-5,6,7,8-tetrahydrofolate pocket.

Belongs to the TRAFAC class TrmE-Era-EngA-EngB-Septin-like GTPase superfamily. TrmE GTPase family. In terms of assembly, homodimer. Heterotetramer of two MnmE and two MnmG subunits. Requires K(+) as cofactor.

The protein localises to the cytoplasm. Its function is as follows. Exhibits a very high intrinsic GTPase hydrolysis rate. Involved in the addition of a carboxymethylaminomethyl (cmnm) group at the wobble position (U34) of certain tRNAs, forming tRNA-cmnm(5)s(2)U34. This is tRNA modification GTPase MnmE from Fervidobacterium nodosum (strain ATCC 35602 / DSM 5306 / Rt17-B1).